The chain runs to 490 residues: 23S rRNA (uracil(1939)-C(5))-methyltransferase RlmD (490 aa).

The TRAM domain maps to 14-75 (APAPAEYPID…SSFEKATLTA (62 aa)). Residues Cys-88, Cys-98, Cys-101, and Cys-180 each coordinate [4Fe-4S] cluster. S-adenosyl-L-methionine is bound by residues Gln-289, Phe-318, Asn-323, Glu-339, Asn-374, and Asp-395. The active-site Nucleophile is the Cys-446.

This sequence belongs to the class I-like SAM-binding methyltransferase superfamily. RNA M5U methyltransferase family. RlmD subfamily.

The catalysed reaction is uridine(1939) in 23S rRNA + S-adenosyl-L-methionine = 5-methyluridine(1939) in 23S rRNA + S-adenosyl-L-homocysteine + H(+). Its function is as follows. Catalyzes the formation of 5-methyl-uridine at position 1939 (m5U1939) in 23S rRNA. This Polaromonas naphthalenivorans (strain CJ2) protein is 23S rRNA (uracil(1939)-C(5))-methyltransferase RlmD.